Consider the following 329-residue polypeptide: uncharacterized protein (329 aa).

The signal sequence occupies residues 1-32 (MSQDRGPRRPRRLEKCALISASATVLSLTASG). C33 is lipidated: N-palmitoyl cysteine. C33 carries the S-diacylglycerol cysteine lipid modification.

The protein resides in the cell membrane. This is an uncharacterized protein from Streptomyces coelicolor (strain ATCC BAA-471 / A3(2) / M145).